We begin with the raw amino-acid sequence, 64 residues long: Small ribosomal subunit protein bS21 (64 aa).

Belongs to the bacterial ribosomal protein bS21 family.

In Karelsulcia muelleri (strain GWSS) (Sulcia muelleri), this protein is Small ribosomal subunit protein bS21.